Here is a 640-residue protein sequence, read N- to C-terminus: Phosphomethylpyrimidine synthase (640 aa).

Substrate contacts are provided by residues Asn235, Met264, Tyr293, His329, 349-351 (SRG), 390-393 (DGLR), and Glu429. Residue His433 participates in Zn(2+) binding. A substrate-binding site is contributed by Tyr456. His497 contributes to the Zn(2+) binding site. [4Fe-4S] cluster contacts are provided by Cys577, Cys580, and Cys585.

The protein belongs to the ThiC family. In terms of assembly, homodimer. [4Fe-4S] cluster is required as a cofactor.

It carries out the reaction 5-amino-1-(5-phospho-beta-D-ribosyl)imidazole + S-adenosyl-L-methionine = 4-amino-2-methyl-5-(phosphooxymethyl)pyrimidine + CO + 5'-deoxyadenosine + formate + L-methionine + 3 H(+). The protein operates within cofactor biosynthesis; thiamine diphosphate biosynthesis. In terms of biological role, catalyzes the synthesis of the hydroxymethylpyrimidine phosphate (HMP-P) moiety of thiamine from aminoimidazole ribotide (AIR) in a radical S-adenosyl-L-methionine (SAM)-dependent reaction. The sequence is that of Phosphomethylpyrimidine synthase from Photobacterium profundum (strain SS9).